We begin with the raw amino-acid sequence, 139 residues long: Transcription antitermination protein NusB (139 aa).

The protein belongs to the NusB family.

Functionally, involved in transcription antitermination. Required for transcription of ribosomal RNA (rRNA) genes. Binds specifically to the boxA antiterminator sequence of the ribosomal RNA (rrn) operons. This is Transcription antitermination protein NusB from Salmonella agona (strain SL483).